The following is a 224-amino-acid chain: Probable molybdenum cofactor guanylyltransferase (224 aa).

Residues 20-22 (LAG), Lys33, Asp88, and Asp117 each bind GTP. Asp117 is a binding site for Mg(2+).

This sequence belongs to the MobA family. Requires Mg(2+) as cofactor.

The protein resides in the cytoplasm. It catalyses the reaction Mo-molybdopterin + GTP + H(+) = Mo-molybdopterin guanine dinucleotide + diphosphate. In terms of biological role, transfers a GMP moiety from GTP to Mo-molybdopterin (Mo-MPT) cofactor (Moco or molybdenum cofactor) to form Mo-molybdopterin guanine dinucleotide (Mo-MGD) cofactor. The polypeptide is Probable molybdenum cofactor guanylyltransferase (Methanosarcina mazei (strain ATCC BAA-159 / DSM 3647 / Goe1 / Go1 / JCM 11833 / OCM 88) (Methanosarcina frisia)).